We begin with the raw amino-acid sequence, 152 residues long: Ribosome maturation factor RimP (152 aa).

It belongs to the RimP family.

The protein localises to the cytoplasm. Required for maturation of 30S ribosomal subunits. In Citrobacter koseri (strain ATCC BAA-895 / CDC 4225-83 / SGSC4696), this protein is Ribosome maturation factor RimP.